A 268-amino-acid polypeptide reads, in one-letter code: Undecaprenyl-diphosphatase (268 aa).

7 consecutive transmembrane segments (helical) span residues 47–67 (FAVL…FAKL), 83–103 (FVIG…VAGS), 109–129 (LFNP…LLWV), 144–164 (FPLP…IPGV), 184–204 (AAEF…VYDF), 218–238 (IVAI…KTFL), and 246–266 (FELF…ALAM).

This sequence belongs to the UppP family.

It is found in the cell inner membrane. It catalyses the reaction di-trans,octa-cis-undecaprenyl diphosphate + H2O = di-trans,octa-cis-undecaprenyl phosphate + phosphate + H(+). In terms of biological role, catalyzes the dephosphorylation of undecaprenyl diphosphate (UPP). Confers resistance to bacitracin. In Rhodopseudomonas palustris (strain BisB5), this protein is Undecaprenyl-diphosphatase.